The chain runs to 385 residues: Probable caffeine synthase MTL1 (385 aa).

S-adenosyl-L-homocysteine-binding residues include Tyr18, Cys62, Asn67, Asp101, Leu102, Ser140, and Phe141. Caffeine contacts are provided by Tyr158, Gln161, and Phe162. Asn179 lines the Mg(2+) pocket. Residue Thr238 participates in caffeine binding. Mg(2+)-binding residues include Asp261, Phe263, and Asn264. Tyr369 lines the caffeine pocket.

This sequence belongs to the methyltransferase superfamily. Type-7 methyltransferase family. It depends on Mg(2+) as a cofactor.

It functions in the pathway alkaloid biosynthesis. May be involved in the biosynthesis of caffeine. In Coffea canephora (Robusta coffee), this protein is Probable caffeine synthase MTL1.